The sequence spans 379 residues: UDP-4-amino-4-deoxy-L-arabinose--oxoglutarate aminotransferase (379 aa).

Lys183 carries the N6-(pyridoxal phosphate)lysine modification.

This sequence belongs to the DegT/DnrJ/EryC1 family. ArnB subfamily. Homodimer. It depends on pyridoxal 5'-phosphate as a cofactor.

The catalysed reaction is UDP-4-amino-4-deoxy-beta-L-arabinose + 2-oxoglutarate = UDP-beta-L-threo-pentopyranos-4-ulose + L-glutamate. It participates in nucleotide-sugar biosynthesis; UDP-4-deoxy-4-formamido-beta-L-arabinose biosynthesis; UDP-4-deoxy-4-formamido-beta-L-arabinose from UDP-alpha-D-glucuronate: step 2/3. It functions in the pathway bacterial outer membrane biogenesis; lipopolysaccharide biosynthesis. Catalyzes the conversion of UDP-4-keto-arabinose (UDP-Ara4O) to UDP-4-amino-4-deoxy-L-arabinose (UDP-L-Ara4N). The modified arabinose is attached to lipid A and is required for resistance to polymyxin and cationic antimicrobial peptides. This is UDP-4-amino-4-deoxy-L-arabinose--oxoglutarate aminotransferase from Pseudomonas fluorescens (strain ATCC BAA-477 / NRRL B-23932 / Pf-5).